We begin with the raw amino-acid sequence, 561 residues long: Long-chain-fatty-acid--CoA ligase (561 aa).

ATP is bound at residue 213-224 (YTGGTTGVAKGA).

Belongs to the ATP-dependent AMP-binding enzyme family. Mg(2+) serves as cofactor.

The protein localises to the membrane. The enzyme catalyses a long-chain fatty acid + ATP + CoA = a long-chain fatty acyl-CoA + AMP + diphosphate. Its pathway is lipid metabolism; fatty acid beta-oxidation. Its function is as follows. Catalyzes the esterification, concomitant with transport, of exogenous long-chain fatty acids into metabolically active CoA thioesters for subsequent degradation or incorporation into phospholipids. In Escherichia coli O6:H1 (strain CFT073 / ATCC 700928 / UPEC), this protein is Long-chain-fatty-acid--CoA ligase (fadD).